Here is a 456-residue protein sequence, read N- to C-terminus: NADH-quinone oxidoreductase subunit N (456 aa).

A run of 14 helical transmembrane segments spans residues 6 to 26 (LFALSPLAALAIGAVIAMLLA), 45 to 65 (VAALLEILRAGVPPAPIGALF), 75 to 95 (TAYAALFGLAALVFLRVAGVA), 97 to 117 (EAPALVALVALGAASLTGAGH), 118 to 138 (AATLFLGLELISLSLIALFAF), 151 to 171 (FLVMSGLATSAQLLGVALIYA), 181 to 201 (WVGHGPLFALGTALLLAGLAF), 220 to 240 (PAGAAALAGVVSKAAVAIAIL), 252 to 272 (LWSAGLATLGAASVLVGNVLA), 281 to 301 (MLGYSTIAHSGYIAMILASGA), 308 to 328 (VLFYLGIYAPALTATLCASAM), 355 to 375 (GLLSLAGLPVAGGFVAKLYLF), 382 to 402 (ESWILLAIAMVGAALGFYYYI), and 426 to 446 (LLLIFCFGLIMLFGFEPLVLI).

Belongs to the complex I subunit 2 family. As to quaternary structure, NDH-1 is composed of 14 different subunits. Subunits NuoA, H, J, K, L, M, N constitute the membrane sector of the complex.

It localises to the cell inner membrane. The enzyme catalyses a quinone + NADH + 5 H(+)(in) = a quinol + NAD(+) + 4 H(+)(out). Functionally, NDH-1 shuttles electrons from NADH, via FMN and iron-sulfur (Fe-S) centers, to quinones in the respiratory chain. The immediate electron acceptor for the enzyme in this species is believed to be ubiquinone. Couples the redox reaction to proton translocation (for every two electrons transferred, four hydrogen ions are translocated across the cytoplasmic membrane), and thus conserves the redox energy in a proton gradient. This is NADH-quinone oxidoreductase subunit N from Rhodopseudomonas palustris (strain BisA53).